We begin with the raw amino-acid sequence, 346 residues long: NADH-ubiquinone oxidoreductase chain 2 (346 aa).

11 helical membrane-spanning segments follow: residues 1 to 21 (MNPH…TITI), 25 to 45 (HWVL…PLIS), 60 to 80 (FLTQ…NAWA), 95 to 115 (CLLL…HFWF), 124 to 144 (LMTA…LLLM), 149 to 169 (LNPA…GWMG), 178 to 195 (ILAF…IILV), 200 to 219 (LALL…FMAL), 242 to 262 (ATLM…GFMP), 274 to 294 (EMTP…FFYL), and 326 to 346 (AILA…HAIV).

It belongs to the complex I subunit 2 family.

The protein localises to the mitochondrion inner membrane. The catalysed reaction is a ubiquinone + NADH + 5 H(+)(in) = a ubiquinol + NAD(+) + 4 H(+)(out). Functionally, core subunit of the mitochondrial membrane respiratory chain NADH dehydrogenase (Complex I) that is believed to belong to the minimal assembly required for catalysis. Complex I functions in the transfer of electrons from NADH to the respiratory chain. The immediate electron acceptor for the enzyme is believed to be ubiquinone. The chain is NADH-ubiquinone oxidoreductase chain 2 (MT-ND2) from Mareca penelope (Eurasian wigeon).